We begin with the raw amino-acid sequence, 290 residues long: Short-chain dehydrogenase srdE (290 aa).

Residues Ile11, Thr37, Asp58, and Asn86 each contribute to the NADP(+) site. Residues 125–145 (LIASSGIIVNIGSIGGVVPFV) form a helical membrane-spanning segment. Tyr150 contributes to the NADP(+) binding site. Tyr150 functions as the Proton donor in the catalytic mechanism. A glycan (N-linked (GlcNAc...) asparagine) is linked at Asn151. Positions 154, 183, and 185 each coordinate NADP(+). The active-site Lowers pKa of active site Tyr is the Lys154.

It belongs to the short-chain dehydrogenases/reductases (SDR) family.

The protein resides in the membrane. Its function is as follows. Short-chain dehydrogenase; part of the gene cluster that mediates the biosynthesis of sordarial, a salicylic aldehyde structurally related to the phytotoxin pyriculol. The most interesting aspect of this pathway is formation of an aromatic product from the highly reducing polyketide synthase srdA. SrdA synthesizes a reduced polyketide chain from one molecule of acetyl-CoA and five molecules of malonyl-CoA. The polyketide chain is then reductively released as an aldehyde. The oxidoreductases srdC, srdD and srdE then oxidize one of the hydroxy groups to facilitate the intramolecular aldol condensation, followed by dehydration to yield a salicylic aldehyde. This aldehyde can undergo facile reduction by endogenous reductases to yield the alcohol 1-hydroxy-2-hydroxymethyl-3-pent-1,3-dienylbenzene. The flavin-dependent srdI counteract against the propensity of the aldehydes to be reduced under physiological conditions and is responsible for reoxidizing 1-hydroxy-2-hydroxymethyl-3-pent-1,3-dienylbenzene back to the salicylic aldehyde. This salicylic aldehyde is then selectively epoxidized by the cupin-domain-containing oxidoreductase srdB to yield the epoxide, which can be hydrolyzed stereoselectively by the hydrolase srdG to give the final product sordarial. This chain is Short-chain dehydrogenase srdE, found in Neurospora crassa (strain ATCC 24698 / 74-OR23-1A / CBS 708.71 / DSM 1257 / FGSC 987).